Reading from the N-terminus, the 29-residue chain is Cyclotide mden-F (29 aa).

Residues 1–29 (GLPICGETCFFGKCNTPKCTCINPICYKN) constitute a cross-link (cyclopeptide (Gly-Asn)). 3 disulfide bridges follow: Cys-5/Cys-19, Cys-9/Cys-21, and Cys-14/Cys-26.

The protein belongs to the cyclotide family. This is a cyclic peptide.

Its function is as follows. Probably participates in a plant defense mechanism. The polypeptide is Cyclotide mden-F (Melicytus dentatus (Tree violet)).